A 229-amino-acid polypeptide reads, in one-letter code: Adenylate kinase 1 (229 aa).

42–47 lines the ATP pocket; the sequence is GCGKGT. Serine 62 carries the post-translational modification Phosphoserine. Residues serine 63, arginine 68, 118–121, and glutamine 125 each bind AMP; that span reads GYPR. Arginine 156 serves as a coordination point for ATP. Arginine 164 and arginine 175 together coordinate AMP.

The protein belongs to the adenylate kinase family. AK1 subfamily. High expression levels in the thorax, suggesting a possible function in the gastrointestinal or reproductive systems.

Its subcellular location is the cytoplasm. It catalyses the reaction AMP + ATP = 2 ADP. Catalyzes the reversible transfer of the terminal phosphate group between ATP and AMP. Plays an important role in cellular energy homeostasis and in adenine nucleotide metabolism. The chain is Adenylate kinase 1 from Drosophila melanogaster (Fruit fly).